Consider the following 103-residue polypeptide: Integration host factor subunit beta (103 aa).

This sequence belongs to the bacterial histone-like protein family. In terms of assembly, heterodimer of an alpha and a beta chain.

Its function is as follows. This protein is one of the two subunits of integration host factor, a specific DNA-binding protein that functions in genetic recombination as well as in transcriptional and translational control. This is Integration host factor subunit beta from Rhizobium meliloti (strain 1021) (Ensifer meliloti).